A 1106-amino-acid polypeptide reads, in one-letter code: Protein kinase C (1106 aa).

The 67-residue stretch at 1–67 (MDGDDLIASV…MRELQLRQMK (67 aa)) folds into the REM-1 1 domain. The interval 65–138 (QMKQEGASPT…PRPFAPVPKA (74 aa)) is disordered. Residues 79-93 (PPNPDGSAPVPPPKD) show a composition bias toward pro residues. Residues 149–226 (KYDTPYLGPK…LKRYEDLHVD (78 aa)) form the REM-1 2 domain. One can recognise a C2 domain in the interval 232–350 (APDDESLSTP…MRRKKIESEF (119 aa)). Residues 361–370 (MEHGAAHGRQ) show a composition bias toward basic and acidic residues. Residues 361 to 400 (MEHGAAHGRQDAGGAPGSSNRPPSGGHSGGPGQGYAGGAP) form a disordered region. Residues 386–400 (GHSGGPGQGYAGGAP) are compositionally biased toward gly residues. Phorbol-ester/DAG-type zinc fingers lie at residues 460 to 508 (GHKF…VTKC) and 528 to 578 (PHRF…PDFC). Polar residues-rich tracts occupy residues 600–609 (KSASVSSGLS) and 658–668 (YIPPQSPTAAQ). 2 disordered regions span residues 600–625 (KSAS…PQDN) and 658–719 (YIPP…HAHY). Over residues 683 to 693 (AAAAAAAAAAA) the composition is skewed to low complexity. The Protein kinase domain occupies 781–1040 (FNFLAVLGKG…AQEVMSHAFF (260 aa)). Residues 787 to 795 (LGKGNFGKV) and Lys-810 contribute to the ATP site. Catalysis depends on Asp-906, which acts as the Proton acceptor. Residues 1041-1106 (RNINWDDIYH…RGFSYTADFA (66 aa)) form the AGC-kinase C-terminal domain. A Phosphothreonine modification is found at Thr-1082. Ser-1100 bears the Phosphoserine mark. The residue at position 1101 (Tyr-1101) is a Phosphotyrosine.

This sequence belongs to the protein kinase superfamily. AGC Ser/Thr protein kinase family. PKC subfamily. Interacts with hsp90.

The catalysed reaction is L-seryl-[protein] + ATP = O-phospho-L-seryl-[protein] + ADP + H(+). The enzyme catalyses L-threonyl-[protein] + ATP = O-phospho-L-threonyl-[protein] + ADP + H(+). In terms of biological role, protein kinase C; part of cell wall integrity (CWI) signaling pathway composed of pkcA, the bck1-mkk2-mpka MAPK cascade and the downstream rlmA transcription regulator. The CWI signaling pathway regulates cell wall integrity and pyomelanin formation. CWI also controls oxidative stress response, gliotoxin production, iron adaptation and asexual development. Finally, CWI is constitutively required for A.fumigatus to cope with the temperature increase found in the mammalian lung environment, during infection. Modulates the expression of fumiquinazoline cluster during conidiogenesis. In Aspergillus fumigatus (strain ATCC MYA-4609 / CBS 101355 / FGSC A1100 / Af293) (Neosartorya fumigata), this protein is Protein kinase C.